A 629-amino-acid chain; its full sequence is Kelch-like protein 8 (629 aa).

A compositionally biased stretch (polar residues) spans 1-10 (MASESTNGKQ). The tract at residues 1 to 40 (MASESTNGKQARSHVTKGRRQYQHQHQQQQQQQQQVRSRS) is disordered. The residue at position 2 (alanine 2) is an N-acetylalanine. Over residues 11 to 23 (ARSHVTKGRRQYQ) the composition is skewed to basic residues. Over residues 24–35 (HQHQQQQQQQQQ) the composition is skewed to low complexity. Residues 76 to 143 (CDVTLKVGSK…VYSSRLTLTV (68 aa)) enclose the BTB domain. The BACK domain maps to 178 to 279 (CLAVRAFAES…LPVDFLMGVV (102 aa)). Kelch repeat units lie at residues 328-375 (VLFC…SVEG), 376-422 (KVYA…SLGG), 424-469 (IYAI…ALIN), 471-516 (VYAV…ELHG), 517-563 (CLYV…TVMG), and 565-610 (IFAV…VCDC).

As to quaternary structure, component of the BCR(KLHL8) E3 ubiquitin ligase complex, at least composed of CUL3, KLHL8 and RBX1. Interacts with RAPSN.

It participates in protein modification; protein ubiquitination. In terms of biological role, substrate-specific adapter of a BCR (BTB-CUL3-RBX1) E3 ubiquitin ligase complex required for The BCR(KLHL8) ubiquitin ligase complex mediates ubiquitination and degradation of RAPSN. This Mus musculus (Mouse) protein is Kelch-like protein 8 (Klhl8).